We begin with the raw amino-acid sequence, 209 residues long: Imidazole glycerol phosphate synthase subunit HisH (209 aa).

The region spanning 1 to 205 (MIAIIDYGMG…KGVVETWKSS (205 aa)) is the Glutamine amidotransferase type-1 domain. The Nucleophile role is filled by C79. Catalysis depends on residues H180 and E182.

As to quaternary structure, heterodimer of HisH and HisF.

It is found in the cytoplasm. It carries out the reaction 5-[(5-phospho-1-deoxy-D-ribulos-1-ylimino)methylamino]-1-(5-phospho-beta-D-ribosyl)imidazole-4-carboxamide + L-glutamine = D-erythro-1-(imidazol-4-yl)glycerol 3-phosphate + 5-amino-1-(5-phospho-beta-D-ribosyl)imidazole-4-carboxamide + L-glutamate + H(+). It catalyses the reaction L-glutamine + H2O = L-glutamate + NH4(+). It functions in the pathway amino-acid biosynthesis; L-histidine biosynthesis; L-histidine from 5-phospho-alpha-D-ribose 1-diphosphate: step 5/9. Functionally, IGPS catalyzes the conversion of PRFAR and glutamine to IGP, AICAR and glutamate. The HisH subunit catalyzes the hydrolysis of glutamine to glutamate and ammonia as part of the synthesis of IGP and AICAR. The resulting ammonia molecule is channeled to the active site of HisF. The sequence is that of Imidazole glycerol phosphate synthase subunit HisH from Bacillus thuringiensis subsp. konkukian (strain 97-27).